Here is a 629-residue protein sequence, read N- to C-terminus: Forkhead box protein O1-B (629 aa).

4 disordered regions span residues 1-54, 88-134, 211-308, and 359-397; these read MAEP…PEQG, CAHP…SRRN, SWWM…SPFL, and KNNT…QPQV. Residues 36-46 show a composition bias toward polar residues; the sequence is QPGNSNTSSPA. Low complexity-rich tracts occupy residues 90-107 and 115-133; these read HPQQ…THPQ and PASG…SSRR. The fork-head DNA-binding region spans 136 to 230; sequence WGNMSYADLI…KSGKSPRRRA (95 aa). A compositionally biased stretch (basic residues) spans 240–251; sequence TKSRGRAAKKKM. Composition is skewed to polar residues over residues 291–302, 359–377, and 385–397; these read TRASSDASTLSG, KNNT…SPLM, and SYTS…QPQV.

Its subcellular location is the cytoplasm. It is found in the nucleus. Functionally, transcription factor that regulates metabolic homeostasis in response to oxidative stress. Binds to the consensus sequence 5'-TT[G/A]TTTTG-3' and the related Daf-16 family binding element (DBE) with consensus sequence 5'-TT[G/A]TTTAC-3'. Main regulator of redox balance and osteoblast numbers and controls bone mass. Orchestrates the endocrine function of the skeleton in regulating glucose metabolism. May act as a positive regulator of apoptosis in cardiac smooth muscle cells as a result of its transcriptional activation of pro-apoptotic genes. In Danio rerio (Zebrafish), this protein is Forkhead box protein O1-B (foxo1b).